The following is a 276-amino-acid chain: Bifunctional protein FolD (276 aa).

Residues 158–160, Ser-183, and Ile-224 contribute to the NADP(+) site; that span reads NRS.

Belongs to the tetrahydrofolate dehydrogenase/cyclohydrolase family. Homodimer.

The enzyme catalyses (6R)-5,10-methylene-5,6,7,8-tetrahydrofolate + NADP(+) = (6R)-5,10-methenyltetrahydrofolate + NADPH. It catalyses the reaction (6R)-5,10-methenyltetrahydrofolate + H2O = (6R)-10-formyltetrahydrofolate + H(+). It participates in one-carbon metabolism; tetrahydrofolate interconversion. Its function is as follows. Catalyzes the oxidation of 5,10-methylenetetrahydrofolate to 5,10-methenyltetrahydrofolate and then the hydrolysis of 5,10-methenyltetrahydrofolate to 10-formyltetrahydrofolate. In Picrophilus torridus (strain ATCC 700027 / DSM 9790 / JCM 10055 / NBRC 100828 / KAW 2/3), this protein is Bifunctional protein FolD.